The sequence spans 114 residues: UPF0102 protein HPAG1_0809 (114 aa).

Belongs to the UPF0102 family.

The sequence is that of UPF0102 protein HPAG1_0809 from Helicobacter pylori (strain HPAG1).